Reading from the N-terminus, the 881-residue chain is Probable alpha/beta-glucosidase agdC (881 aa).

Positions 1–14 (MLRSLLLLAPLVGA) are cleaved as a signal peptide. Asn-171, Asn-293, and Asn-373 each carry an N-linked (GlcNAc...) asparagine glycan. Residue Asp-422 is the Nucleophile of the active site. Glu-425 is a catalytic residue. The segment at 440–485 (YSRDNDLPPAAPPVRPSNPRPLPGFPGDFQPSSSSKRSTKGSKVGL) is disordered. Pro residues predominate over residues 448–463 (PAAPPVRPSNPRPLPG). Asn-506 is a glycosylation site (N-linked (GlcNAc...) asparagine). Asp-571 (proton donor) is an active-site residue. N-linked (GlcNAc...) asparagine glycans are attached at residues Asn-572, Asn-608, and Asn-742.

The protein belongs to the glycosyl hydrolase 31 family.

It localises to the secreted. It catalyses the reaction Hydrolysis of terminal, non-reducing (1-&gt;4)-linked alpha-D-glucose residues with release of alpha-D-glucose.. The catalysed reaction is Hydrolysis of terminal, non-reducing beta-D-glucosyl residues with release of beta-D-glucose.. Glucosidase involved in the degradation of cellulosic biomass. Has both alpha- and beta-glucosidase activity. The chain is Probable alpha/beta-glucosidase agdC (agdC) from Neosartorya fischeri (strain ATCC 1020 / DSM 3700 / CBS 544.65 / FGSC A1164 / JCM 1740 / NRRL 181 / WB 181) (Aspergillus fischerianus).